Here is a 228-residue protein sequence, read N- to C-terminus: Urease accessory protein UreG (228 aa).

A GTP-binding site is contributed by 34–41; it reads GPVGSGKT.

The protein belongs to the SIMIBI class G3E GTPase family. UreG subfamily. As to quaternary structure, homodimer. UreD, UreF and UreG form a complex that acts as a GTP-hydrolysis-dependent molecular chaperone, activating the urease apoprotein by helping to assemble the nickel containing metallocenter of UreC. The UreE protein probably delivers the nickel.

It is found in the cytoplasm. Facilitates the functional incorporation of the urease nickel metallocenter. This process requires GTP hydrolysis, probably effectuated by UreG. The polypeptide is Urease accessory protein UreG (Rhodococcus opacus (strain B4)).